Reading from the N-terminus, the 130-residue chain is MKRSVIFVLLIFCALPVLCSQTSAPPKRHISCRFTQIWNIPSCYNKQSDLSEAWLYAIISVMVFCSTIFALAIYPYLDIGWNAIDAMNHPTFPVPAVIPLQQVIAPINQPRPPSPTPTEISYFNLTGGDD.

Positions methionine 1–cysteine 19 are cleaved as a signal peptide. Residues alanine 53 to leucine 77 traverse the membrane as a helical segment. The segment at tyrosine 122–leucine 125 is tyrosine-based sorting motif.

It belongs to the adenoviridae E3_RID-beta family. In terms of assembly, interacts with E3 RID-alpha and E3 CR1-alpha. Post-translationally, phosphorylated on serine. O-glycosylated, but not N-glycosylated.

The protein localises to the host membrane. Prevents infected cell apoptosis induced by the host immune system. Acts by down-regulating a number of cell surface receptors in the tumor necrosis factor (TNF) receptor superfamily, namely FAS, TNFRSF10A/TRAIL receptor 1, and TNFRSF10B/TRAIL receptor 2. Down-regulation of these death receptors protects adenovirus-infected cells from apoptosis induced by the death receptor ligands Fas ligand and TRAIL. RID complex also down-regulates certain tyrosine kinase cell surface receptors, especially the epidermal growth factor receptor (EGFR). RID-mediated Fas and EGFR down-regulation occurs via endocytosis of the receptors into endosomes followed by transport to and degradation within lysosomes. In Human adenovirus C serotype 2 (HAdV-2), this protein is Early 3 receptor internalization and degradation beta protein.